Here is a 303-residue protein sequence, read N- to C-terminus: Siderophore enterobactin esterase (303 aa).

Belongs to the esterase D family. Homodimer.

The enzyme catalyses enterobactin + 3 H2O = 3 N-(2,3-dihydroxybenzoyl)-L-serine + 2 H(+). Functionally, displays specific enterobactin (ENB) esterase activity required for intracellular release of iron. Enterobactin is a xenosiderophore that is selectively produced by Gram-negative Enterobacteriaceae. The affinity for enterobactin is quite high, potentially due to the low natural abundance of this xenosiderophore in fungal habitats. Does not hydrolyze triacetylfusarinine C (TAFC). The chain is Siderophore enterobactin esterase from Emericella nidulans (strain FGSC A4 / ATCC 38163 / CBS 112.46 / NRRL 194 / M139) (Aspergillus nidulans).